The following is a 227-amino-acid chain: Phosphoribosylformylglycinamidine synthase subunit PurQ (227 aa).

The 223-residue stretch at phenylalanine 3–valine 225 folds into the Glutamine amidotransferase type-1 domain. Residue cysteine 86 is the Nucleophile of the active site. Catalysis depends on residues histidine 194 and glutamate 196.

Part of the FGAM synthase complex composed of 1 PurL, 1 PurQ and 2 PurS subunits.

Its subcellular location is the cytoplasm. It carries out the reaction N(2)-formyl-N(1)-(5-phospho-beta-D-ribosyl)glycinamide + L-glutamine + ATP + H2O = 2-formamido-N(1)-(5-O-phospho-beta-D-ribosyl)acetamidine + L-glutamate + ADP + phosphate + H(+). The catalysed reaction is L-glutamine + H2O = L-glutamate + NH4(+). Its pathway is purine metabolism; IMP biosynthesis via de novo pathway; 5-amino-1-(5-phospho-D-ribosyl)imidazole from N(2)-formyl-N(1)-(5-phospho-D-ribosyl)glycinamide: step 1/2. Functionally, part of the phosphoribosylformylglycinamidine synthase complex involved in the purines biosynthetic pathway. Catalyzes the ATP-dependent conversion of formylglycinamide ribonucleotide (FGAR) and glutamine to yield formylglycinamidine ribonucleotide (FGAM) and glutamate. The FGAM synthase complex is composed of three subunits. PurQ produces an ammonia molecule by converting glutamine to glutamate. PurL transfers the ammonia molecule to FGAR to form FGAM in an ATP-dependent manner. PurS interacts with PurQ and PurL and is thought to assist in the transfer of the ammonia molecule from PurQ to PurL. The sequence is that of Phosphoribosylformylglycinamidine synthase subunit PurQ from Bacillus anthracis (strain A0248).